The following is a 631-amino-acid chain: Glutamyl-tRNA(Gln) amidotransferase subunit E (631 aa).

This sequence belongs to the GatB/GatE family. GatE subfamily. In terms of assembly, heterodimer of GatD and GatE.

The catalysed reaction is L-glutamyl-tRNA(Gln) + L-glutamine + ATP + H2O = L-glutaminyl-tRNA(Gln) + L-glutamate + ADP + phosphate + H(+). Allows the formation of correctly charged Gln-tRNA(Gln) through the transamidation of misacylated Glu-tRNA(Gln) in organisms which lack glutaminyl-tRNA synthetase. The reaction takes place in the presence of glutamine and ATP through an activated gamma-phospho-Glu-tRNA(Gln). The GatDE system is specific for glutamate and does not act on aspartate. The protein is Glutamyl-tRNA(Gln) amidotransferase subunit E of Methanococcus maripaludis (strain C6 / ATCC BAA-1332).